Consider the following 272-residue polypeptide: ATP synthase subunit a (272 aa).

The next 7 helical transmembrane spans lie at 39–59 (GFWA…LIFI), 103–123 (VAPL…LKWI), 124–144 (PVDY…KIVP), 152–172 (FGIS…VKGV), 181–201 (FTPF…IIGL), 221–241 (VVFI…NVPW), and 242–262 (AIFH…LTVV).

Belongs to the ATPase A chain family. In terms of assembly, F-type ATPases have 2 components, CF(1) - the catalytic core - and CF(0) - the membrane proton channel. CF(1) has five subunits: alpha(3), beta(3), gamma(1), delta(1), epsilon(1). CF(0) has three main subunits: a(1), b(2) and c(9-12). The alpha and beta chains form an alternating ring which encloses part of the gamma chain. CF(1) is attached to CF(0) by a central stalk formed by the gamma and epsilon chains, while a peripheral stalk is formed by the delta and b chains.

It localises to the cell inner membrane. Key component of the proton channel; it plays a direct role in the translocation of protons across the membrane. This Ectopseudomonas mendocina (strain ymp) (Pseudomonas mendocina) protein is ATP synthase subunit a.